The sequence spans 341 residues: Anthranilate phosphoribosyltransferase (341 aa).

Residues Gly-79, 82–83, Thr-87, 89–92, 107–115, and Ala-119 each bind 5-phospho-alpha-D-ribose 1-diphosphate; these read GD, NIST, and KHGNRAASS. Gly-79 provides a ligand contact to anthranilate. Ser-91 provides a ligand contact to Mg(2+). Asn-110 is a binding site for anthranilate. Position 165 (Arg-165) interacts with anthranilate. Positions 224 and 225 each coordinate Mg(2+).

It belongs to the anthranilate phosphoribosyltransferase family. In terms of assembly, homodimer. It depends on Mg(2+) as a cofactor.

The catalysed reaction is N-(5-phospho-beta-D-ribosyl)anthranilate + diphosphate = 5-phospho-alpha-D-ribose 1-diphosphate + anthranilate. It functions in the pathway amino-acid biosynthesis; L-tryptophan biosynthesis; L-tryptophan from chorismate: step 2/5. In terms of biological role, catalyzes the transfer of the phosphoribosyl group of 5-phosphorylribose-1-pyrophosphate (PRPP) to anthranilate to yield N-(5'-phosphoribosyl)-anthranilate (PRA). This Lacticaseibacillus paracasei (strain ATCC 334 / BCRC 17002 / CCUG 31169 / CIP 107868 / KCTC 3260 / NRRL B-441) (Lactobacillus paracasei) protein is Anthranilate phosphoribosyltransferase.